The primary structure comprises 124 residues: Small ribosomal subunit protein uS12 (124 aa).

Residue aspartate 89 is modified to 3-methylthioaspartic acid. Positions 105–124 (QGVKNRKQARSRYGAKKEKS) are disordered. The span at 108–118 (KNRKQARSRYG) shows a compositional bias: basic residues.

Belongs to the universal ribosomal protein uS12 family. Part of the 30S ribosomal subunit. Contacts proteins S8 and S17. May interact with IF1 in the 30S initiation complex.

In terms of biological role, with S4 and S5 plays an important role in translational accuracy. Interacts with and stabilizes bases of the 16S rRNA that are involved in tRNA selection in the A site and with the mRNA backbone. Located at the interface of the 30S and 50S subunits, it traverses the body of the 30S subunit contacting proteins on the other side and probably holding the rRNA structure together. The combined cluster of proteins S8, S12 and S17 appears to hold together the shoulder and platform of the 30S subunit. The chain is Small ribosomal subunit protein uS12 (rpsL) from Mycolicibacterium smegmatis (strain ATCC 700084 / mc(2)155) (Mycobacterium smegmatis).